We begin with the raw amino-acid sequence, 289 residues long: Elongation factor Ts (289 aa).

The tract at residues 82–85 (TDFL) is involved in Mg(2+) ion dislocation from EF-Tu.

This sequence belongs to the EF-Ts family.

It localises to the cytoplasm. Its function is as follows. Associates with the EF-Tu.GDP complex and induces the exchange of GDP to GTP. It remains bound to the aminoacyl-tRNA.EF-Tu.GTP complex up to the GTP hydrolysis stage on the ribosome. The sequence is that of Elongation factor Ts from Azotobacter vinelandii (strain DJ / ATCC BAA-1303).